The primary structure comprises 121 residues: Non-structural protein 3a (121 aa).

The first 39 residues, 1 to 39 (MMSMRSRRSMFIEHFNELMMRVQRPPTLLLILLVANAFS), serve as a signal peptide directing secretion.

The protein is Non-structural protein 3a of Bat coronavirus HKU5 (BtCoV).